A 1617-amino-acid polypeptide reads, in one-letter code: ATP-binding cassette sub-family A member 6 (1617 aa).

A helical membrane pass occupies residues 31–51; sequence LLEWGLSILLGLCIALFSSSM. Asn-84 and Asn-109 each carry an N-linked (GlcNAc...) asparagine glycan. 6 helical membrane passes run 222–242, 268–288, 297–317, 327–347, 355–375, and 397–417; these read MFILFFLLHFSPLVYFISLNV, GLIYAGFIFIISIFVTIIITF, FMVIFILFFLYGLSLVALVFL, LTNLVVFLLTLFWGCLGFTVF, LEWILNICSPFAFTTGMIQII, and IATFSMLLLDGLIYLLLALYF. Residues 478 to 713 enclose the ABC transporter 1 domain; sequence IRIRNVKKEY…WGLGYHLSLH (236 aa). 514–521 is an ATP binding site; it reads GHSGAGKS. Residues 854-874 form a helical membrane-spanning segment; the sequence is VLLTLLLVFGIAIFPLIVENI. The N-linked (GlcNAc...) asparagine glycan is linked to Asn-940. 6 helical membrane-spanning segments follow: residues 1007–1027, 1062–1082, 1094–1114, 1127–1147, 1150–1170, and 1194–1214; these read IGLWTGLPDGSFFLFLVLCSI, ALVDVSFFILILLLMYLIFYI, IVFALVIVTPGYAASLVFFIY, SGLWSFYFFFASTIMFSITLI, FDLSILITTMVLVPSYTLLGF, and ATDFLVCFIPYFQTLLFVFVL. In terms of domain architecture, ABC transporter 2 spans 1288-1513; it reads GQKKSCFSKR…LGKDYILELK (226 aa). 1320–1327 contacts ATP; that stretch reads GPNGAGKS.

This sequence belongs to the ABC transporter superfamily. ABCA family. In terms of tissue distribution, widely expressed with higher expression in liver.

The protein resides in the golgi apparatus membrane. In terms of biological role, probable transporter which may play a role in macrophage lipid transport and homeostasis. This Homo sapiens (Human) protein is ATP-binding cassette sub-family A member 6 (ABCA6).